We begin with the raw amino-acid sequence, 99 residues long: Protein Frey (99 aa).

The chain crosses the membrane as a helical span at residues 13–29; it reads AGLSLFALYLVLAAALL. A disordered region spans residues 64-90; sequence RPKHPWPRGPRPLLSRAQQRKRDGPDM.

As to quaternary structure, interacts with SPPL2C (via active sites); the interaction stabilizes FREY1 protein and inhibits SPPL2C proteolytic activity. Interacts with IZUMO1; the interaction retains IZUMO1 at the endoplasmic reticulum membrane and coordinates IZUMO1 complex assembly.

It localises to the endoplasmic reticulum membrane. In terms of biological role, key regulator for male fertility expressed transiently in round spermatids where it recruits IZUMO1 at the endoplasmic reticulum (ER) membrane and coordinates the oolemmal binding multimeric complex (IZUMO1 complex) assembly. Upon complete assembly of the IZUMO1 complex, its ER retention is released, facilitating IZUMO1 complex export to the acrosome. Through the interaction with SPPL2C, inhibits its intramembrane protease activity directly accessing the catalytic center of an I-CLiP. This is Protein Frey (FREY1) from Bos taurus (Bovine).